The following is a 461-amino-acid chain: Bifunctional protein GlmU (461 aa).

The interval methionine 1–arginine 229 is pyrophosphorylase. UDP-N-acetyl-alpha-D-glucosamine contacts are provided by residues leucine 8–glycine 11, lysine 22, glutamine 72, and glycine 77–threonine 78. Residue aspartate 102 participates in Mg(2+) binding. UDP-N-acetyl-alpha-D-glucosamine contacts are provided by glycine 139, glutamate 154, asparagine 169, and asparagine 227. Asparagine 227 contributes to the Mg(2+) binding site. The interval isoleucine 230–aspartate 250 is linker. Residues glycine 251–lysine 461 form an N-acetyltransferase region. The UDP-N-acetyl-alpha-D-glucosamine site is built by arginine 332 and lysine 350. Histidine 362 functions as the Proton acceptor in the catalytic mechanism. Residues tyrosine 365 and asparagine 376 each contribute to the UDP-N-acetyl-alpha-D-glucosamine site. Residues alanine 422 and arginine 439 each contribute to the acetyl-CoA site.

It in the N-terminal section; belongs to the N-acetylglucosamine-1-phosphate uridyltransferase family. This sequence in the C-terminal section; belongs to the transferase hexapeptide repeat family. As to quaternary structure, homotrimer. Mg(2+) serves as cofactor.

The protein localises to the cytoplasm. It catalyses the reaction alpha-D-glucosamine 1-phosphate + acetyl-CoA = N-acetyl-alpha-D-glucosamine 1-phosphate + CoA + H(+). It carries out the reaction N-acetyl-alpha-D-glucosamine 1-phosphate + UTP + H(+) = UDP-N-acetyl-alpha-D-glucosamine + diphosphate. It functions in the pathway nucleotide-sugar biosynthesis; UDP-N-acetyl-alpha-D-glucosamine biosynthesis; N-acetyl-alpha-D-glucosamine 1-phosphate from alpha-D-glucosamine 6-phosphate (route II): step 2/2. The protein operates within nucleotide-sugar biosynthesis; UDP-N-acetyl-alpha-D-glucosamine biosynthesis; UDP-N-acetyl-alpha-D-glucosamine from N-acetyl-alpha-D-glucosamine 1-phosphate: step 1/1. Its pathway is bacterial outer membrane biogenesis; LPS lipid A biosynthesis. Its function is as follows. Catalyzes the last two sequential reactions in the de novo biosynthetic pathway for UDP-N-acetylglucosamine (UDP-GlcNAc). The C-terminal domain catalyzes the transfer of acetyl group from acetyl coenzyme A to glucosamine-1-phosphate (GlcN-1-P) to produce N-acetylglucosamine-1-phosphate (GlcNAc-1-P), which is converted into UDP-GlcNAc by the transfer of uridine 5-monophosphate (from uridine 5-triphosphate), a reaction catalyzed by the N-terminal domain. The chain is Bifunctional protein GlmU from Lactobacillus delbrueckii subsp. bulgaricus (strain ATCC 11842 / DSM 20081 / BCRC 10696 / JCM 1002 / NBRC 13953 / NCIMB 11778 / NCTC 12712 / WDCM 00102 / Lb 14).